Consider the following 188-residue polypeptide: GPI-anchored hemophore ARB_01017 (188 aa).

An N-terminal signal peptide occupies residues 1–17 (MKLSVVALAALVSVAAA). The 90-residue stretch at 18 to 107 (QGVSELPKCA…SSSSGSASST (90 aa)) folds into the CFEM domain. 4 disulfide bridges follow: Cys26-Cys64, Cys30-Cys59, Cys39-Cys45, and Cys47-Cys80. A heme-binding site is contributed by Asp42. Residues 95–163 (TGGSSSSGSA…ATSTGAPTQT (69 aa)) are disordered. Residue Asn165 is the site of GPI-anchor amidated asparagine attachment. A propeptide spans 166–188 (AAASVNANGGLLAAIAALVIAVA) (removed in mature form).

It belongs to the RBT5 family. Post-translationally, the GPI-anchor is attached to the protein in the endoplasmic reticulum and serves to target the protein to the cell surface. There, the glucosamine-inositol phospholipid moiety is cleaved off and the GPI-modified mannoprotein is covalently attached via its lipidless GPI glycan remnant to the 1,6-beta-glucan of the outer cell wall layer.

It is found in the secreted. The protein resides in the cell wall. It localises to the cell membrane. GPI-anchored cell wall protein involved in stabilizing the cell wall. In Arthroderma benhamiae (strain ATCC MYA-4681 / CBS 112371) (Trichophyton mentagrophytes), this protein is GPI-anchored hemophore ARB_01017.